A 263-amino-acid chain; its full sequence is Putative alpha/beta hydrolase L404 (263 aa).

A lipid anchor (N-myristoyl glycine; by host) is attached at G2.

Belongs to the AB hydrolase superfamily.

This chain is Putative alpha/beta hydrolase L404, found in Acanthamoeba polyphaga (Amoeba).